Consider the following 548-residue polypeptide: Flagellin (548 aa).

The protein belongs to the bacterial flagellin family.

It is found in the secreted. The protein localises to the bacterial flagellum. In terms of biological role, flagellin is the subunit protein which polymerizes to form the filaments of bacterial flagella. This Escherichia coli O127:H6 (strain E2348/69 / EPEC) protein is Flagellin (fliC).